Here is a 644-residue protein sequence, read N- to C-terminus: Phosphomethylpyrimidine synthase (644 aa).

Residues Asn236, Met265, Tyr294, His330, 350 to 352 (SRG), 391 to 394 (DGLR), and Glu430 each bind substrate. His434 is a binding site for Zn(2+). A substrate-binding site is contributed by Tyr457. Residue His498 participates in Zn(2+) binding. 3 residues coordinate [4Fe-4S] cluster: Cys578, Cys581, and Cys586. The tract at residues 623–644 (RQKSEEFKASGSELYHPAVEAE) is disordered.

It belongs to the ThiC family. Homodimer. [4Fe-4S] cluster serves as cofactor.

The enzyme catalyses 5-amino-1-(5-phospho-beta-D-ribosyl)imidazole + S-adenosyl-L-methionine = 4-amino-2-methyl-5-(phosphooxymethyl)pyrimidine + CO + 5'-deoxyadenosine + formate + L-methionine + 3 H(+). It participates in cofactor biosynthesis; thiamine diphosphate biosynthesis. Catalyzes the synthesis of the hydroxymethylpyrimidine phosphate (HMP-P) moiety of thiamine from aminoimidazole ribotide (AIR) in a radical S-adenosyl-L-methionine (SAM)-dependent reaction. The chain is Phosphomethylpyrimidine synthase from Aliivibrio fischeri (strain MJ11) (Vibrio fischeri).